A 462-amino-acid polypeptide reads, in one-letter code: A-type ATP synthase subunit B (462 aa).

The protein belongs to the ATPase alpha/beta chains family. As to quaternary structure, has multiple subunits with at least A(3), B(3), C, D, E, F, H, I and proteolipid K(x).

It is found in the cell membrane. Functionally, component of the A-type ATP synthase that produces ATP from ADP in the presence of a proton gradient across the membrane. The B chain is a regulatory subunit. The polypeptide is A-type ATP synthase subunit B (Methanococcus maripaludis (strain C5 / ATCC BAA-1333)).